The primary structure comprises 324 residues: Histidine N-acetyltransferase (324 aa).

Positions 15-151 (FEFVLAAEKE…GILLLSFNAP (137 aa)) constitute an N-acetyltransferase domain.

It catalyses the reaction L-histidine + acetyl-CoA = N(alpha)-acetyl-L-histidine + CoA + H(+). Enzyme responsible for the N-acetyl-histidine (NAH) synthesis, which is a major constituent of brain and lens of ectothermic vertebrates. The polypeptide is Histidine N-acetyltransferase (hisat) (Xenopus tropicalis (Western clawed frog)).